The chain runs to 254 residues: Mamu class II histocompatibility antigen, DR alpha chain (254 aa).

The first 25 residues, 1–25 (MAESGVPVLGFFIIAVLMSAQESWA), serve as a signal peptide directing secretion. The segment at 26-109 (IKEEHVIIQA…KRSNNTPITN (84 aa)) is alpha-1. Residues 26–216 (IKEEHVIIQA…APSPLPETTE (191 aa)) lie on the Extracellular side of the membrane. Asparagine 103 is a glycosylation site (N-linked (GlcNAc...) asparagine). An alpha-2 region spans residues 110–203 (VPPEVTVLTN…CLDAPLLKHW (94 aa)). Residues 112-204 (PEVTVLTNSP…LDAPLLKHWE (93 aa)) enclose the Ig-like C1-type domain. Residues cysteine 132 and cysteine 188 are joined by a disulfide bond. The tract at residues 204-216 (EFDAPSPLPETTE) is connecting peptide. Residues 217-239 (NVVCALGLIVGLVGIIVGTVFII) traverse the membrane as a helical segment. Residues 240 to 254 (KGVRKSNAAERRGPL) lie on the Cytoplasmic side of the membrane. Lysine 244 is covalently cross-linked (Glycyl lysine isopeptide (Lys-Gly) (interchain with G-Cter in ubiquitin)).

Belongs to the MHC class II family. In terms of assembly, heterodimer of an alpha chain and a beta chain.

It localises to the membrane. This chain is Mamu class II histocompatibility antigen, DR alpha chain (Mamu-DRA), found in Macaca mulatta (Rhesus macaque).